The chain runs to 238 residues: Purine nucleoside phosphorylase DeoD-type (238 aa).

His5 lines the a purine D-ribonucleoside pocket. Residues Gly21, Arg25, Arg44, and 88–91 (RVGS) contribute to the phosphate site. Residues 180 to 182 (EME) and 204 to 205 (SD) each bind a purine D-ribonucleoside. The Proton donor role is filled by Asp205.

It belongs to the PNP/UDP phosphorylase family. As to quaternary structure, homohexamer; trimer of homodimers.

The enzyme catalyses a purine D-ribonucleoside + phosphate = a purine nucleobase + alpha-D-ribose 1-phosphate. It catalyses the reaction a purine 2'-deoxy-D-ribonucleoside + phosphate = a purine nucleobase + 2-deoxy-alpha-D-ribose 1-phosphate. Its function is as follows. Catalyzes the reversible phosphorolytic breakdown of the N-glycosidic bond in the beta-(deoxy)ribonucleoside molecules, with the formation of the corresponding free purine bases and pentose-1-phosphate. This Photorhabdus laumondii subsp. laumondii (strain DSM 15139 / CIP 105565 / TT01) (Photorhabdus luminescens subsp. laumondii) protein is Purine nucleoside phosphorylase DeoD-type.